Consider the following 89-residue polypeptide: Small ribosomal subunit protein uS19 (89 aa).

The protein belongs to the universal ribosomal protein uS19 family.

Protein S19 forms a complex with S13 that binds strongly to the 16S ribosomal RNA. This is Small ribosomal subunit protein uS19 from Rhodopirellula baltica (strain DSM 10527 / NCIMB 13988 / SH1).